The primary structure comprises 185 residues: ATP-dependent protease subunit HslV (185 aa).

Threonine 13 is an active-site residue. Positions 167, 170, and 173 each coordinate Na(+).

Belongs to the peptidase T1B family. HslV subfamily. In terms of assembly, a double ring-shaped homohexamer of HslV is capped on each side by a ring-shaped HslU homohexamer. The assembly of the HslU/HslV complex is dependent on binding of ATP.

Its subcellular location is the cytoplasm. It carries out the reaction ATP-dependent cleavage of peptide bonds with broad specificity.. Its activity is regulated as follows. Allosterically activated by HslU binding. Its function is as follows. Protease subunit of a proteasome-like degradation complex believed to be a general protein degrading machinery. The sequence is that of ATP-dependent protease subunit HslV from Sinorhizobium fredii (strain NBRC 101917 / NGR234).